A 218-amino-acid chain; its full sequence is Small ribosomal subunit protein uS3 (218 aa).

One can recognise a KH type-2 domain in the interval 38–106 (IRKFIATKLA…RVHINIVEIK (69 aa)).

It belongs to the universal ribosomal protein uS3 family. In terms of assembly, part of the 30S ribosomal subunit. Forms a tight complex with proteins S10 and S14.

Binds the lower part of the 30S subunit head. Binds mRNA in the 70S ribosome, positioning it for translation. The chain is Small ribosomal subunit protein uS3 from Enterococcus faecalis (strain ATCC 700802 / V583).